A 551-amino-acid chain; its full sequence is Cation/acetate symporter ActP (551 aa).

The next 13 helical transmembrane spans lie at 34–54, 77–97, 104–124, 150–170, 184–204, 207–227, 263–283, 304–324, 356–376, 406–426, 430–450, 469–489, and 498–518; these read IEAI…TYWA, GLAI…SALV, GLIY…LIAE, LSAC…MVGA, VAVV…GMLA, WVQI…ALMV, ISAL…PHIL, GFIG…ILLV, FFLG…VAGL, VSKI…ILFE, IAFM…PIIF, LGLL…VTIL, and YEYP…FFSI.

The protein belongs to the sodium:solute symporter (SSF) (TC 2.A.21) family.

Its subcellular location is the cell inner membrane. Functionally, transports acetate. In Yersinia enterocolitica serotype O:8 / biotype 1B (strain NCTC 13174 / 8081), this protein is Cation/acetate symporter ActP.